A 473-amino-acid polypeptide reads, in one-letter code: Mitochondrial distribution and morphology protein 10 (473 aa).

It belongs to the MDM10 family. Component of the ER-mitochondria encounter structure (ERMES) or MDM complex, composed of MMM1, MDM10, MDM12 and MDM34. Associates with the mitochondrial outer membrane sorting assembly machinery SAM(core) complex.

The protein resides in the mitochondrion outer membrane. In terms of biological role, component of the ERMES/MDM complex, which serves as a molecular tether to connect the endoplasmic reticulum and mitochondria. Components of this complex are involved in the control of mitochondrial shape and protein biogenesis and may function in phospholipid exchange. MDM10 is involved in the late assembly steps of the general translocase of the mitochondrial outer membrane (TOM complex). Functions in the TOM40-specific route of the assembly of outer membrane beta-barrel proteins, including the association of TOM40 with the receptor TOM22 and small TOM proteins. Can associate with the SAM(core) complex as well as the MDM12-MMM1 complex, both involved in late steps of the major beta-barrel assembly pathway, that is responsible for biogenesis of all outer membrane beta-barrel proteins. May act as a switch that shuttles between both complexes and channels precursor proteins into the TOM40-specific pathway. Plays a role in mitochondrial morphology and in the inheritance of mitochondria. In Candida albicans (strain SC5314 / ATCC MYA-2876) (Yeast), this protein is Mitochondrial distribution and morphology protein 10.